A 241-amino-acid polypeptide reads, in one-letter code: Spiralin (241 aa).

Residues 1-23 form the signal peptide; it reads MKKLLSILAVFGVSAVGTTSVVA. Residue Cys-24 is the site of N-palmitoyl cysteine attachment. Cys-24 carries the S-diacylglycerol cysteine lipid modification.

It belongs to the spiralin family. In terms of assembly, seems to occur as dimer, tetramers, and large oligomers of identical chains. Post-translationally, palmitate and stearate are the major lipid components.

It localises to the cell membrane. Functionally, major membrane protein of spiroplasma. The protein is Spiralin (spi) of Spiroplasma citri.